Here is a 581-residue protein sequence, read N- to C-terminus: Leucine-rich repeat transmembrane neuronal protein 3 (581 aa).

A signal peptide spans 1 to 30 (MGFNVIRLLSGSAVALVIAPTVLLTMLSSA). Residues 31–61 (ERGCPKGCRCEGKMVYCESQKLQEIPSSISA) form the LRRNT domain. Residues 31–419 (ERGCPKGCRC…ADAEHISFHK (389 aa)) lie on the Extracellular side of the membrane. LRR repeat units follow at residues 63 to 83 (CLGL…QFKG), 86 to 107 (QLTW…AFNG), 110 to 131 (RLKE…TFRP), 134 to 155 (NLRN…QFRG), 158 to 179 (KLLS…IFQD), 182 to 203 (NLEL…VFAG), 206 to 226 (RLKE…ALFP), 230 to 251 (SLQN…MSWT), 254 to 275 (SLQR…SVFQ), and 279 to 300 (NLQR…ILDS). N126 is a glycosylation site (N-linked (GlcNAc...) asparagine). In terms of domain architecture, LRRCT spans 312-363 (NIWECSRNICSLVNWLKSFKGLRENTIICASPKELQGVNVIDAVKNYSICGK). An N-linked (GlcNAc...) asparagine glycan is attached at N357. The tract at residues 377-408 (KPTFKPKLPRPKHESKPPLPPTVGATEPGPET) is disordered. A helical membrane pass occupies residues 420 to 440 (IIAGSVALFLSVLVILLVIYV). Over 441-581 (SWKRYPASMK…RISDHKQQLA (141 aa)) the chain is Cytoplasmic.

This sequence belongs to the LRRTM family. Expressed in neuronal tissues.

It localises to the cell membrane. The protein localises to the postsynaptic cell membrane. In terms of biological role, exhibits a limited synaptogenic activity in vitro, restricted to excitatory presynaptic differentiation. May play a role in the development and maintenance of the vertebrate nervous system. This Homo sapiens (Human) protein is Leucine-rich repeat transmembrane neuronal protein 3 (LRRTM3).